Reading from the N-terminus, the 74-residue chain is Conotoxin ca17a (74 aa).

The first 20 residues, 1–20 (MQKATVLLLALLLLLPLSTA), serve as a signal peptide directing secretion. The propeptide occupies 21 to 40 (QDAEGSQEDAAQREVDIATR). Proline 51 is modified (4-hydroxyproline).

Contains disulfide bonds. In terms of tissue distribution, expressed by the venom gland.

It is found in the secreted. The polypeptide is Conotoxin ca17a (Conus caracteristicus (Characteristic cone)).